Consider the following 237-residue polypeptide: Cobalt-precorrin-2 C(20)-methyltransferase (237 aa).

This sequence belongs to the precorrin methyltransferase family. In terms of assembly, homodimer.

It catalyses the reaction Co-precorrin-2 + S-adenosyl-L-methionine = Co-precorrin-3 + S-adenosyl-L-homocysteine + H(+). The protein operates within cofactor biosynthesis; adenosylcobalamin biosynthesis; cob(II)yrinate a,c-diamide from sirohydrochlorin (anaerobic route): step 2/10. In terms of biological role, methylates cobalt-precorrin-2 at the C-20 position to produce cobalt-precorrin-3A in the anaerobic cobalamin biosynthesis pathway. The chain is Cobalt-precorrin-2 C(20)-methyltransferase (cbiL) from Salmonella typhimurium (strain LT2 / SGSC1412 / ATCC 700720).